The chain runs to 163 residues: Cyclic pyranopterin monophosphate synthase (163 aa).

Residues 75–77 (MCH) and 113–114 (ME) contribute to the substrate site. D128 is an active-site residue.

Belongs to the MoaC family. Homohexamer; trimer of dimers.

It carries out the reaction (8S)-3',8-cyclo-7,8-dihydroguanosine 5'-triphosphate = cyclic pyranopterin phosphate + diphosphate. It functions in the pathway cofactor biosynthesis; molybdopterin biosynthesis. In terms of biological role, catalyzes the conversion of (8S)-3',8-cyclo-7,8-dihydroguanosine 5'-triphosphate to cyclic pyranopterin monophosphate (cPMP). The protein is Cyclic pyranopterin monophosphate synthase of Desulforapulum autotrophicum (strain ATCC 43914 / DSM 3382 / VKM B-1955 / HRM2) (Desulfobacterium autotrophicum).